A 190-amino-acid chain; its full sequence is Potassium-transporting ATPase KdpC subunit (190 aa).

The helical transmembrane segment at V9–I29 threads the bilayer.

The protein belongs to the KdpC family. In terms of assembly, the system is composed of three essential subunits: KdpA, KdpB and KdpC.

The protein resides in the cell inner membrane. Its function is as follows. Part of the high-affinity ATP-driven potassium transport (or Kdp) system, which catalyzes the hydrolysis of ATP coupled with the electrogenic transport of potassium into the cytoplasm. This subunit acts as a catalytic chaperone that increases the ATP-binding affinity of the ATP-hydrolyzing subunit KdpB by the formation of a transient KdpB/KdpC/ATP ternary complex. The chain is Potassium-transporting ATPase KdpC subunit from Citrifermentans bemidjiense (strain ATCC BAA-1014 / DSM 16622 / JCM 12645 / Bem) (Geobacter bemidjiensis).